The following is a 798-amino-acid chain: Elongation factor G, mitochondrial (798 aa).

Residues 1-24 (MRVIRAAAALNSSCAASSRQGARY) constitute a mitochondrion transit peptide. Positions 97–383 (SMVRNIGIAA…AVCDYLPNPG (287 aa)) constitute a tr-type G domain. GTP is bound by residues 106-113 (AHIDSGKT), 181-185 (DTPGH), and 235-238 (NKMD).

The protein belongs to the TRAFAC class translation factor GTPase superfamily. Classic translation factor GTPase family. EF-G/EF-2 subfamily.

Its subcellular location is the mitochondrion. It participates in protein biosynthesis; polypeptide chain elongation. In terms of biological role, mitochondrial GTPase that catalyzes the GTP-dependent ribosomal translocation step during translation elongation. During this step, the ribosome changes from the pre-translocational (PRE) to the post-translocational (POST) state as the newly formed A-site-bound peptidyl-tRNA and P-site-bound deacylated tRNA move to the P and E sites, respectively. Catalyzes the coordinated movement of the two tRNA molecules, the mRNA and conformational changes in the ribosome. The sequence is that of Elongation factor G, mitochondrial from Chaetomium globosum (strain ATCC 6205 / CBS 148.51 / DSM 1962 / NBRC 6347 / NRRL 1970) (Soil fungus).